Here is a 438-residue protein sequence, read N- to C-terminus: Exosome complex component RRP45 (438 aa).

Residue Ser65 is modified to Phosphoserine. The residue at position 297 (Lys297) is an N6-acetyllysine; alternate. Lys297 is covalently cross-linked (Glycyl lysine isopeptide (Lys-Gly) (interchain with G-Cter in SUMO1); alternate). A Glycyl lysine isopeptide (Lys-Gly) (interchain with G-Cter in SUMO2); alternate cross-link involves residue Lys297. Ser306 and Ser346 each carry phosphoserine. Disordered stretches follow at residues Ala337–Asp365 and Thr377–Asn438. Residues Asp349–Ile364 are compositionally biased toward acidic residues. Ser393 and Ser395 each carry phosphoserine. Positions Gln427–Asn438 are enriched in basic residues.

Belongs to the RNase PH family. Component of the RNA exosome core complex (Exo-9), composed of EXOSC1, EXOSC2, EXOSC3, EXOSC4, EXOSC5, EXOSC6, EXOSC7, EXOSC8 and EXOSC9; within the complex interacts with EXOSC3, EXOSC4, EXOSC5 and DIS3. The catalytically inactive RNA exosome core complex (Exo-9) associates with the catalytic subunit EXOSC10/RRP6. Exo-9 may associate with DIS3 to form the nucleolar exosome complex, or DIS3L to form the cytoplasmic exosome complex. Exo-9 is formed by a hexameric base ring consisting of the heterodimers EXOSC4-EXOSC9, EXOSC5-EXOSC8 and EXOSC6-EXOSC7, and a cap ring consisting of EXOSC1, EXOSC2 and EXOSC3. The RNA exosome complex associates with cofactors C1D/RRP47, MPHOSPH6/MPP6 and MTREX/MTR4. Interacts (via C-terminus region) with SETX (via N-terminus domain); the interaction enhances SETX sumoylation. Interacts with DIS3; the interaction is direct.

It localises to the cytoplasm. The protein resides in the nucleus. It is found in the nucleolus. The protein localises to the nucleoplasm. Functionally, non-catalytic component of the RNA exosome complex which has 3'-&gt;5' exoribonuclease activity and participates in a multitude of cellular RNA processing and degradation events. In the nucleus, the RNA exosome complex is involved in proper maturation of stable RNA species such as rRNA, snRNA and snoRNA, in the elimination of RNA processing by-products and non-coding 'pervasive' transcripts, such as antisense RNA species and promoter-upstream transcripts (PROMPTs), and of mRNAs with processing defects, thereby limiting or excluding their export to the cytoplasm. The RNA exosome may be involved in Ig class switch recombination (CSR) and/or Ig variable region somatic hypermutation (SHM) by targeting AICDA deamination activity to transcribed dsDNA substrates. In the cytoplasm, the RNA exosome complex is involved in general mRNA turnover and specifically degrades inherently unstable mRNAs containing AU-rich elements (AREs) within their 3' untranslated regions, and in RNA surveillance pathways, preventing translation of aberrant mRNAs. It seems to be involved in degradation of histone mRNA. The catalytic inactive RNA exosome core complex of 9 subunits (Exo-9) is proposed to play a pivotal role in the binding and presentation of RNA for ribonucleolysis, and to serve as a scaffold for the association with catalytic subunits and accessory proteins or complexes. EXOSC9 binds to ARE-containing RNAs. In Mus musculus (Mouse), this protein is Exosome complex component RRP45 (Exosc9).